The following is a 306-amino-acid chain: Acetyl-coenzyme A carboxylase carboxyl transferase subunit beta (306 aa).

One can recognise a CoA carboxyltransferase N-terminal domain in the interval 25 to 294; sequence VWTKCDSCGQ…PQDPLPHEPR (270 aa). The Zn(2+) site is built by Cys-29, Cys-32, Cys-48, and Cys-51. The C4-type zinc finger occupies 29–51; it reads CDSCGQVLYRAELERNLEVCPKC. The interval 281–306 is disordered; it reads NRPQPQDPLPHEPRPDAVPEDHQDEV. The segment covering 289-306 has biased composition (basic and acidic residues); sequence LPHEPRPDAVPEDHQDEV.

This sequence belongs to the AccD/PCCB family. In terms of assembly, acetyl-CoA carboxylase is a heterohexamer composed of biotin carboxyl carrier protein (AccB), biotin carboxylase (AccC) and two subunits each of ACCase subunit alpha (AccA) and ACCase subunit beta (AccD). Zn(2+) serves as cofactor.

The protein resides in the cytoplasm. It catalyses the reaction N(6)-carboxybiotinyl-L-lysyl-[protein] + acetyl-CoA = N(6)-biotinyl-L-lysyl-[protein] + malonyl-CoA. It participates in lipid metabolism; malonyl-CoA biosynthesis; malonyl-CoA from acetyl-CoA: step 1/1. Its function is as follows. Component of the acetyl coenzyme A carboxylase (ACC) complex. Biotin carboxylase (BC) catalyzes the carboxylation of biotin on its carrier protein (BCCP) and then the CO(2) group is transferred by the transcarboxylase to acetyl-CoA to form malonyl-CoA. In Sodalis glossinidius (strain morsitans), this protein is Acetyl-coenzyme A carboxylase carboxyl transferase subunit beta.